The primary structure comprises 744 residues: Collagen alpha-1(VIII) chain (744 aa).

Residues 1 to 24 (MAVPPRPLQLLGILFIISLNSVRL) form the signal peptide. The tract at residues 29–118 (AYYGIKPLPP…KGEVPLASLR (90 aa)) is nonhelical region (NC2). Over residues 101–110 (KEVVPKKGKG) the composition is skewed to basic and acidic residues. 3 disordered regions span residues 101 to 395 (KEVV…EPGL), 412 to 439 (GPKG…GFPG), and 457 to 590 (GPIG…DMGL). Residues 119 to 572 (GEQGPRGEPG…PGPPGPPGPP (454 aa)) are triple-helical region (COL1). Residues 129-138 (PRGPPGPPGL) show a composition bias toward pro residues. A compositionally biased stretch (low complexity) spans 169-191 (KPGAMGMPGAKGEIGPKGEIGPM). The span at 204–218 (GLPGIGKPGGPGLPG) shows a compositional bias: gly residues. Over residues 298–307 (PQGLIGVPGV) the composition is skewed to low complexity. Composition is skewed to gly residues over residues 329-338 (GFPGGKGEQG) and 412-421 (GPKGEGGVVG). Composition is skewed to low complexity over residues 470-507 (LPGL…VGPS) and 548-557 (PGALGPQGQP). A compositionally biased stretch (pro residues) spans 559-579 (LPGPPGPPGPPGPPAVMPTPS). Residues 573–744 (AVMPTPSPQG…SFSGYLLYPM (172 aa)) are nonhelical region (NC1). One can recognise a C1q domain in the interval 611–744 (PAYEMPAFTA…SFSGYLLYPM (134 aa)).

Homotrimers, or heterotrimers in association with alpha 2(VIII) type collagens. Four homotrimers can form a tetrahedron stabilized by central interacting C-terminal NC1 trimers. Prolines at the third position of the tripeptide repeating unit (G-X-Y) are hydroxylated in some or all of the chains. Post-translationally, proteolytically cleaved by neutrophil elastase, in vitro. Proteolytic processing produces the C-terminal NC1 domain fragment, vastatin. High levels in calvarium, eye and skin of newborn mice; also in various epithelial, endothelial and mesenchymal cells.

It is found in the secreted. The protein localises to the extracellular space. Its subcellular location is the extracellular matrix. It localises to the basement membrane. Macromolecular component of the subendothelium. Major component of the Descemet's membrane (basement membrane) of corneal endothelial cells. Also a component of the endothelia of blood vessels. Necessary for migration and proliferation of vascular smooth muscle cells and thus, has a potential role in the maintenance of vessel wall integrity and structure, in particular in atherogenesis. Functionally, vastatin, the C-terminal fragment comprising the NC1 domain, inhibits aortic endothelial cell proliferation and causes cell apoptosis. The polypeptide is Collagen alpha-1(VIII) chain (Col8a1) (Mus musculus (Mouse)).